The chain runs to 882 residues: Protein PML (882 aa).

Residues 1–48 form a disordered region; sequence MEPAPARSPRPQQDPARPQEPTMPPPETPSEGRQPSPSPSPTERAPAS. Serine 8 bears the Phosphoserine; by HIPK2 mark. Phosphoserine; by HIPK2 and MAPK1 occurs at positions 36 and 38. Serine 48 bears the Phosphoserine mark. Positions 57 and 60 each coordinate Zn(2+). The RING-type zinc-finger motif lies at 57-92; the sequence is CQQCQAEAKCPKLLPCLHTLCSGCLEASGMQCPICQ. Residue lysine 65 forms a Glycyl lysine isopeptide (Lys-Gly) (interchain with G-Cter in SUMO1); alternate linkage. Lysine 65 participates in a covalent cross-link: Glycyl lysine isopeptide (Lys-Gly) (interchain with G-Cter in SUMO2); alternate. Zn(2+) contacts are provided by cysteine 72, histidine 74, cysteine 77, cysteine 80, cysteine 88, and cysteine 91. Phosphoserine; by CHEK2 is present on serine 117. The segment at 124–166 adopts a B box-type 1; atypical zinc-finger fold; sequence DAQAVCTRCKESADFWCFECEQLLCAKCFEAHQWFLKHEARPL. Zn(2+)-binding residues include cysteine 129, cysteine 132, cysteine 151, and histidine 155. Lysine 160 is covalently cross-linked (Glycyl lysine isopeptide (Lys-Gly) (interchain with G-Cter in SUMO1); alternate). Residue lysine 160 forms a Glycyl lysine isopeptide (Lys-Gly) (interchain with G-Cter in SUMO2); alternate linkage. A Glycyl lysine isopeptide (Lys-Gly) (interchain with G-Cter in SUMO1P1/SUMO5); alternate cross-link involves residue lysine 160. The B box-type 2 zinc-finger motif lies at 183–236; it reads KTNNIFCSNPNHRTPTLTSIYCRGCSKPLCCSCALLDSSHSELKCDISAEIQQR. Residues cysteine 189, histidine 194, cysteine 215, and histidine 222 each contribute to the Zn(2+) site. The stretch at 228 to 253 forms a coiled coil; it reads DISAEIQQRQEELDAMTQALQEQDSA. Lysine 380 participates in a covalent cross-link: Glycyl lysine isopeptide (Lys-Gly) (interchain with G-Cter in SUMO2); alternate. Lysine 380 participates in a covalent cross-link: Glycyl lysine isopeptide (Lys-Gly) (interchain with G-Cter in /SUMO5); alternate. Lysine 380 participates in a covalent cross-link: Glycyl lysine isopeptide (Lys-Gly) (interchain with G-Cter in ubiquitin); alternate. Lysine 394 is covalently cross-linked (Glycyl lysine isopeptide (Lys-Gly) (interchain with G-Cter in SUMO2)). Lysine 400 participates in a covalent cross-link: Glycyl lysine isopeptide (Lys-Gly) (interchain with G-Cter in SUMO1P1/SUMO5); alternate. Glycyl lysine isopeptide (Lys-Gly) (interchain with G-Cter in ubiquitin); alternate cross-links involve residues lysine 400 and lysine 401. Lysine 401 is covalently cross-linked (Glycyl lysine isopeptide (Lys-Gly) (interchain with G-Cter in SUMO2); alternate). Serine 403 bears the Phosphoserine; by MAPK1 and MAPK7 mark. Residues 448 to 555 form an interaction with PER2 region; the sequence is GAHPVPVYAF…ASGAGEAEER (108 aa). Residue lysine 460 forms a Glycyl lysine isopeptide (Lys-Gly) (interchain with G-Cter in SUMO2) linkage. A disordered region spans residues 467-589; sequence DVSNTTTAQK…SESSDLQLEG (123 aa). Over residues 468-484 the composition is skewed to polar residues; that stretch reads VSNTTTAQKRKCSQTQC. Residue lysine 476 forms a Glycyl lysine isopeptide (Lys-Gly) (interchain with G-Cter in SUMO2); alternate linkage. Residue lysine 476 forms a Glycyl lysine isopeptide (Lys-Gly) (interchain with G-Cter in ubiquitin); alternate linkage. Positions 476-490 match the Nuclear localization signal motif; sequence KRKCSQTQCPRKVIK. A Glycyl lysine isopeptide (Lys-Gly) (interchain with G-Cter in SUMO2) cross-link involves residue lysine 478. Glycyl lysine isopeptide (Lys-Gly) (interchain with G-Cter in SUMO2); alternate cross-links involve residues lysine 487 and lysine 490. N6-acetyllysine; alternate is present on lysine 487. The segment covering 489–501 has biased composition (basic and acidic residues); the sequence is IKMESEEGKEARL. Lysine 490 participates in a covalent cross-link: Glycyl lysine isopeptide (Lys-Gly) (interchain with G-Cter in SUMO1); alternate. Residue lysine 490 forms a Glycyl lysine isopeptide (Lys-Gly) (interchain with G-Cter in SUMO1P1/SUMO5); alternate linkage. Serine 493 carries the phosphoserine modification. A Glycyl lysine isopeptide (Lys-Gly) (interchain with G-Cter in SUMO1); alternate cross-link involves residue lysine 497. Lysine 497 is covalently cross-linked (Glycyl lysine isopeptide (Lys-Gly) (interchain with G-Cter in SUMO2); alternate). Lysine 497 participates in a covalent cross-link: Glycyl lysine isopeptide (Lys-Gly) (interchain with G-Cter in SUMO1P1/SUMO5); alternate. At serine 504 the chain carries Phosphoserine. Residue serine 505 is modified to Phosphoserine; by MAPK1. Residues 505–516 show a composition bias toward polar residues; the sequence is SPEQPRPSTSKA. Position 512 is a phosphoserine (serine 512). Lysine 515 bears the N6-acetyllysine mark. A phosphoserine mark is found at serine 518, serine 527, and serine 530. Serine 518 is subject to Phosphoserine; by CDK1 and CDK2. Residues serine 527 and serine 530 each carry the phosphoserine; by MAPK1 modification. The sumo interaction motif (SIM) stretch occupies residues 556-562; sequence VVVISSS. Serine 565 is subject to Phosphoserine. Serine 565 bears the Phosphoserine; by CK2 mark. A Phosphothreonine modification is found at threonine 867.

Key component of PML bodies. PML bodies are formed by the interaction of PML homodimers (via SUMO-binding motif) with sumoylated PML, leading to the assembly of higher oligomers. Several types of PML bodies have been observed. PML bodies can form hollow spheres that can sequester target proteins inside. Interacts (via SUMO-binding motif) with sumoylated proteins. Interacts (via C-terminus) with p53/TP53. Recruits p53/TP53 and CHEK2 into PML bodies, which promotes p53/TP53 phosphorylation at 'Ser-20' and prevents its proteasomal degradation. Interacts with MDM2, and sequesters MDM2 in the nucleolus, thereby preventing ubiquitination of p53/TP53. Interaction with PML-RARA oncoprotein and certain viral proteins causes disassembly of PML bodies and abolishes the normal PML function. Interacts with HIPK2, TERT, SIRT1, TOPBP1, TRIM27 and TRIM69. Interacts with ELF4 (via C-terminus). Interacts with ITPR3. Interacts (in the cytoplasm) with TGFBR1, TGFBR2 and PKM. Interacts (via the coiled-coil domain and when sumoylated) with SATB1. Interacts with UBE2I; the interaction is enhanced by arsenic binding. Interacts (PML-RARA oncoprotein, via the coiled-coil domain) with UBE2I; the interaction is enhanced by arsenic binding and is required for PML-RARA oncoprotein sumoylation and inhibition of RARA transactivational activity. Interacts with RB1, PPP1A, SMAD2, SMAD3, DAXX, RPL11 and MTOR. Interacts with PPARGC1A and KAT2A. Interacts with CSNK2A1 and CSNK2A3. Interacts with ANKRD2; the interaction is direct. Interacts (via SUMO-interacting motif) with sumoylated MORC3. Isoform PML-1, isoform PML-2, isoform PML-3, isoform PML-4, isoform PML-5 and isoform PML-6 interact with RNF4. Isoform PML-1 interacts with NLRP3. Isoform PML-1, isoform PML-2, isoform PML-3, isoform PML-4 and isoform PML-5 interact with MAGEA2, RBL2, PER2 and E2F4. Isoform PML-2 interacts with CIITA. Isoform PML-2, isoform PML-3 and isoform PML-4 interact with TBX2. Isoform PML-4 interacts with RANBP2, HDAC7, KAT6A, WRN, PIN1, TBX3 and phosphorylated MAPK1/ERK2. Isoform PML-4 interacts with the CTNNB1 and TCF7L2/TCF4 complex. Isoform PML-4 preferentially interacts with MAPK7/BMK1 although other isoforms (isoform PML-1, isoform PML-2, isoform PML-3 and isoform PML-6) also interact with it. Isoform PML-12 interacts with PIAS1, PIAS2 (isoform PIAS2-alpha) and CSNK2A1/CK2. Interacts with TRIM16. Interacts with PRDM1/Blimp-1. Interacts (via RING-type zinc finger) with EIF4E; the interaction results in conformational changes of both interacting proteins and reduces EIF4E affinity for the 5' m7G cap of mRNA, thus reducing EIF4E-mediated mRNA nuclear export. As to quaternary structure, (Microbial infection) Interacts with Lassa virus Z protein and rabies virus phosphoprotein. In terms of assembly, (Microbial infection) Isoform PML-1 interacts with herpes simplex virus-1/HHV-1 ICP0. (Microbial infection) Isoform PML-2 interacts with human adenovirus 2 E1A and this interaction stimulates E1A-dependent transcriptional activation. As to quaternary structure, (Microbial infection) Isoform PML-4 interacts with VZV capsid protein VP26/ORF23 capsid protein. In terms of assembly, (Microbial infection) The sumoylated isoform PML-4 interacts with encephalomyocarditis virus (EMCV) RNA-directed RNA polymerase 3D-POL (P3D-POL). (Microbial infection) Isoform PML-6 interacts with moloney murine leukemia virus (MoMLV) integrase (IN) and reverse transcriptase (RT). As to quaternary structure, (Microbial infection) Isoform PML-4 and isoform PML-5 interact with human adenovirus 5 E1B-55K protein; these interactions promote efficient subnuclear targeting of E1B-55K to PML nuclear bodies. In terms of assembly, (Microbial infection) Isoform PML-3 interacts (via RING-type zinc finger) with human foamy virus bel1/tas and bet. (Microbial infection) Interacts with human cytomegalovirus (HHV-5) immediate early protein IE1; this interaction mediates PML desumoylation and PML-mediated sumoylation of IE1. Ubiquitinated; mediated by RNF4, RNF111, UHRF1, UBE3A/E6AP, BCR(KLHL20) E3 ubiquitin ligase complex E3 ligase complex, SIAH1 or SIAH2 and leading to subsequent proteasomal degradation. Ubiquitination by BCR(KLHL20) E3 ubiquitin ligase complex E3 ligase complex requires CDK1/2-mediated phosphorylation at Ser-518 which in turn is recognized by prolyl-isopeptidase PIN1 and PIN1-catalyzed isomerization further potentiates PML interaction with KLHL20. 'Lys-6'-, 'Lys-11'-, 'Lys-48'- and 'Lys-63'-linked polyubiquitination by RNF4 is polysumoylation-dependent. Ubiquitination by RNF111 is polysumoylation-dependent. In terms of processing, sumoylation regulates PML's: stability in response to extracellular or intracellular stimuli, transcription directly and indirectly, through sequestration of or dissociation of the transcription factors from PML-NBs, ability to regulate apoptosis and its anti-viral activities. It is also essential for: maintaining proper PML nuclear bodies (PML-NBs) structure and normal function, recruitment of components of PML-NBs, the turnover and retention of PML in PML-NBs and the integrity of PML-NBs. Undergoes 'Lys-11'-linked sumoylation. Sumoylation on all three sites (Lys-65, Lys-160 and Lys-490) is required for nuclear body formation. Sumoylation on Lys-160 is a prerequisite for sumoylation on Lys-65. Lys-65 and Lys-160 are sumoylated by PISA1 and PIAS2. PIAS1-mediated sumoylation of PML promotes its interaction with CSNK2A1/CK2 and phosphorylation at Ser-565 which in turn triggers its ubiquitin-mediated degradation. PIAS1-mediated sumoylation of PML-RARA promotes its ubiquitin-mediated degradation. The PML-RARA fusion protein requires the coiled-coil domain for sumoylation. Sumoylation at Lys-490 by RANBP2 is essential for the proper assembly of PML-NBs. SUMO1P1/SUMO5 conjugated PML at Lys-160, Lys-380, Lys-400, Lys-490 and Lys-497, but Lys-380, Lys-400 and Lys-497 are not key acceptor lysines. SUMO1P1/SUMO5 forms polymeric chain on Lys-160 of PML by successive conjugation at 'Lys-18'; facilitating recruitment of PML-NB components, which enlarges PML. SUMO1P1/SUMO5 conjugation of PML increases SUMO2/3 conjugation, which leads to the recruitment of RNF4 and ubiquitin-dependent disintegration of PML-NBs. SUMO1P1/SUMO5 monoconjugated Lys-490. DNA damage triggers its sumoylation while some but not all viral infections can abolish sumoylation. Desumoylated by SENP1, SENP2, SENP3, SENP5 and SENP6. Arsenic induces PML and PML-RARA polysumoylation and their subsequent RNF4-dependent ubiquitination and proteasomal degradation, and is used as treatment in acute promyelocytic leukemia (APL). The nuclear isoforms (isoform PML-1, isoform PML-2, isoform PML-3, isoform PML-4, isoform PML-5 and isoform PML-6) show an increased sumoylation in response to arsenic trioxide. The cytoplasmic isoform PML-7 is not sumoylated. Post-translationally, phosphorylation is a major regulatory mechanism that controls PML protein abundance and the number and size of PML nuclear bodies (PML-NBs). Phosphorylated in response to DNA damage, probably by ATR. HIPK2-mediated phosphorylation at Ser-8, Ser-36 and Ser-38 leads to increased accumulation of PML protein and its sumoylation and is required for the maximal pro-apoptotic activity of PML after DNA damage. CHEK2-mediated phosphorylation at Ser-117 is important for PML-mediated apoptosis following DNA damage. MAPK1-mediated phosphorylations at Ser-403, Ser-505, Ser-527 and Ser-530 and CDK1/2-mediated phosphorylation at Ser-518 promote PIN1-dependent PML degradation. CK2-mediated phosphorylation at Ser-565 primes PML ubiquitination via an unidentified ubiquitin ligase. (Microbial infection) Upon infection with Epstein-Barr virus, phosphorylated by CK2. Viral EBNA1 increases the association of CK2 with PML proteins, which increases PML phosphorylation by CK2, triggering the USP7-dependent polyubiquitylation and degradation of PML. In terms of processing, acetylation at Lys-487 is essential for its nuclear localization. Deacetylated at Lys-487 by SIRT1 and this deacetylation promotes PML control of PER2 nuclear localization. Post-translationally, (Microbial infection) Immediate early protein IE1 of human cytomegalovirus (HHV-5) interferes with the sumoylation of PML. Immediate early protein IE1 inhibits PML de novo sumoylation. (Microbial infection) Cleaved at two different sites by enterovirus 71 protease 3C, leading to impaired PML-Nuclear bodies formation.

The protein resides in the nucleus. The protein localises to the nucleoplasm. It is found in the cytoplasm. It localises to the PML body. Its subcellular location is the nucleolus. The protein resides in the endoplasmic reticulum membrane. The protein localises to the early endosome membrane. It participates in protein modification; protein sumoylation. In terms of biological role, functions via its association with PML-nuclear bodies (PML-NBs) in a wide range of important cellular processes, including tumor suppression, transcriptional regulation, apoptosis, senescence, DNA damage response, and viral defense mechanisms. Acts as the scaffold of PML-NBs allowing other proteins to shuttle in and out, a process which is regulated by SUMO-mediated modifications and interactions. Inhibits EIF4E-mediated mRNA nuclear export by reducing EIF4E affinity for the 5' 7-methylguanosine (m7G) cap of target mRNAs. Isoform PML-4 has a multifaceted role in the regulation of apoptosis and growth suppression: activates RB1 and inhibits AKT1 via interactions with PP1 and PP2A phosphatases respectively, negatively affects the PI3K pathway by inhibiting MTOR and activating PTEN, and positively regulates p53/TP53 by acting at different levels (by promoting its acetylation and phosphorylation and by inhibiting its MDM2-dependent degradation). Isoform PML-4 also: acts as a transcriptional repressor of TBX2 during cellular senescence and the repression is dependent on a functional RBL2/E2F4 repressor complex, regulates double-strand break repair in gamma-irradiation-induced DNA damage responses via its interaction with WRN, acts as a negative regulator of telomerase by interacting with TERT, and regulates PER2 nuclear localization and circadian function. Isoform PML-6 inhibits specifically the activity of the tetrameric form of PKM. The nuclear isoforms (isoform PML-1, isoform PML-2, isoform PML-3, isoform PML-4 and isoform PML-5) in concert with SATB1 are involved in local chromatin-loop remodeling and gene expression regulation at the MHC-I locus. Isoform PML-2 is required for efficient IFN-gamma induced MHC II gene transcription via regulation of CIITA. Cytoplasmic PML is involved in the regulation of the TGF-beta signaling pathway. PML also regulates transcription activity of ELF4 and can act as an important mediator for TNF-alpha- and IFN-alpha-mediated inhibition of endothelial cell network formation and migration. Its function is as follows. Exhibits antiviral activity against both DNA and RNA viruses. The antiviral activity can involve one or several isoform(s) and can be enhanced by the permanent PML-NB-associated protein DAXX or by the recruitment of p53/TP53 within these structures. Isoform PML-4 restricts varicella zoster virus (VZV) via sequestration of virion capsids in PML-NBs thereby preventing their nuclear egress and inhibiting formation of infectious virus particles. The sumoylated isoform PML-4 restricts rabies virus by inhibiting viral mRNA and protein synthesis. The cytoplasmic isoform PML-14 can restrict herpes simplex virus-1 (HHV-1) replication by sequestering the viral E3 ubiquitin-protein ligase ICP0 in the cytoplasm. Isoform PML-6 shows restriction activity towards human cytomegalovirus (HHV-5) and influenza A virus strains PR8(H1N1) and ST364(H3N2). Sumoylated isoform PML-4 and isoform PML-12 show antiviral activity against encephalomyocarditis virus (EMCV) by promoting nuclear sequestration of viral polymerase (P3D-POL) within PML NBs. Isoform PML-3 exhibits antiviral activity against poliovirus by inducing apoptosis in infected cells through the recruitment and the activation of p53/TP53 in the PML-NBs. Isoform PML-3 represses human foamy virus (HFV) transcription by complexing the HFV transactivator, bel1/tas, preventing its binding to viral DNA. PML may positively regulate infectious hepatitis C viral (HCV) production and isoform PML-2 may enhance adenovirus transcription. Functions as an E3 SUMO-protein ligase that sumoylates (HHV-5) immediate early protein IE1, thereby participating in the antiviral response. Isoforms PML-3 and PML-6 display the highest levels of sumoylation activity. The sequence is that of Protein PML (PML) from Homo sapiens (Human).